A 233-amino-acid chain; its full sequence is AA9 family lytic polysaccharide monooxygenase A (233 aa).

Residues 1-17 form the signal peptide; that stretch reads MKLTTSVALLAAAGAQA. Residues H18 and H90 each coordinate Cu(2+). 2 disulfides stabilise this stretch: C59-C180 and C150-C233. N132 carries N-linked (GlcNAc...) asparagine glycosylation. 2 residues coordinate O2: H166 and Q175. Residue Y177 coordinates Cu(2+).

It belongs to the polysaccharide monooxygenase AA9 family. The cofactor is Cu(2+).

The protein resides in the secreted. The catalysed reaction is [(1-&gt;4)-beta-D-glucosyl]n+m + reduced acceptor + O2 = 4-dehydro-beta-D-glucosyl-[(1-&gt;4)-beta-D-glucosyl]n-1 + [(1-&gt;4)-beta-D-glucosyl]m + acceptor + H2O.. In terms of biological role, lytic polysaccharide monooxygenase (LPMO) that depolymerizes crystalline and amorphous polysaccharides via the oxidation of scissile alpha- or beta-(1-4)-glycosidic bonds, yielding C1 and C4 oxidation products. Catalysis by LPMOs requires the reduction of the active-site copper from Cu(II) to Cu(I) by a reducing agent and H(2)O(2) or O(2) as a cosubstrate. Shows endoglucanase activity on tamarind xyloglucan, as well as on beechwood xylan when combined with phosphoric acid swollen cellulose (PASC). Shows no activity on wheat arabinoxylan, konjac glucomannan, acetylated spruce galactoglucomannan, or cellopentaose. The protein is AA9 family lytic polysaccharide monooxygenase A of Thermothielavioides terrestris (strain ATCC 38088 / NRRL 8126) (Thielavia terrestris).